Consider the following 338-residue polypeptide: Ribosomal RNA small subunit methyltransferase C (338 aa).

The protein belongs to the methyltransferase superfamily. RsmC family. Monomer.

It localises to the cytoplasm. It carries out the reaction guanosine(1207) in 16S rRNA + S-adenosyl-L-methionine = N(2)-methylguanosine(1207) in 16S rRNA + S-adenosyl-L-homocysteine + H(+). Its function is as follows. Specifically methylates the guanine in position 1207 of 16S rRNA in the 30S particle. This chain is Ribosomal RNA small subunit methyltransferase C, found in Acinetobacter baylyi (strain ATCC 33305 / BD413 / ADP1).